The primary structure comprises 500 residues: NADH-quinone oxidoreductase subunit N (500 aa).

14 consecutive transmembrane segments (helical) span residues 6–26, 40–60, 69–89, 106–125, 129–151, 164–184, 207–227, 239–259, 276–296, 302–322, 337–357, 380–400, 417–437, and 464–484; these read SWIA…IALV, ALTL…ALGG, MVVV…ALMI, GGEF…VMIS, FLVL…ALRR, FVLG…LYGA, LVFG…AVPF, PTAV…AMTI, MLAL…VAQT, LAFS…AGVV, MFYA…ILLL, YAGV…LVGF, SYLV…FYYL, and IVLA…SSLM.

Belongs to the complex I subunit 2 family. NDH-1 is composed of 14 different subunits. Subunits NuoA, H, J, K, L, M, N constitute the membrane sector of the complex.

The protein localises to the cell inner membrane. The catalysed reaction is a quinone + NADH + 5 H(+)(in) = a quinol + NAD(+) + 4 H(+)(out). In terms of biological role, NDH-1 shuttles electrons from NADH, via FMN and iron-sulfur (Fe-S) centers, to quinones in the respiratory chain. The immediate electron acceptor for the enzyme in this species is believed to be ubiquinone. Couples the redox reaction to proton translocation (for every two electrons transferred, four hydrogen ions are translocated across the cytoplasmic membrane), and thus conserves the redox energy in a proton gradient. This chain is NADH-quinone oxidoreductase subunit N, found in Polaromonas naphthalenivorans (strain CJ2).